We begin with the raw amino-acid sequence, 307 residues long: tRNA dimethylallyltransferase (307 aa).

8-15 (GPTGSGKS) provides a ligand contact to ATP. A substrate-binding site is contributed by 10-15 (TGSGKS). Residues 33–36 (DSLQ) are interaction with substrate tRNA.

This sequence belongs to the IPP transferase family. As to quaternary structure, monomer. The cofactor is Mg(2+).

It catalyses the reaction adenosine(37) in tRNA + dimethylallyl diphosphate = N(6)-dimethylallyladenosine(37) in tRNA + diphosphate. In terms of biological role, catalyzes the transfer of a dimethylallyl group onto the adenine at position 37 in tRNAs that read codons beginning with uridine, leading to the formation of N6-(dimethylallyl)adenosine (i(6)A). The chain is tRNA dimethylallyltransferase from Solibacter usitatus (strain Ellin6076).